Reading from the N-terminus, the 615-residue chain is Proteasome-associated ATPase (615 aa).

A disordered region spans residues 1-27 (MSESERSEASEVFGTSPDSRLSSEDAA). The stretch at 22–99 (SSEDAAELEQ…LREEVDRLGQ (78 aa)) forms a coiled coil. 302–307 (GCGKTL) contributes to the ATP binding site. Positions 614–615 (YL) are docks into pockets in the proteasome alpha-ring.

The protein belongs to the AAA ATPase family. Homohexamer. Assembles into a hexameric ring structure that caps the 20S proteasome core. Strongly interacts with the prokaryotic ubiquitin-like protein Pup through a hydrophobic interface; the interacting region of ARC lies in its N-terminal coiled-coil domain. There is one Pup binding site per ARC hexamer ring. Upon ATP-binding, the C-terminus of ARC interacts with the alpha-rings of the proteasome core, possibly by binding to the intersubunit pockets.

It functions in the pathway protein degradation; proteasomal Pup-dependent pathway. ATPase which is responsible for recognizing, binding, unfolding and translocation of pupylated proteins into the bacterial 20S proteasome core particle. May be essential for opening the gate of the 20S proteasome via an interaction with its C-terminus, thereby allowing substrate entry and access to the site of proteolysis. Thus, the C-termini of the proteasomal ATPase may function like a 'key in a lock' to induce gate opening and therefore regulate proteolysis. The chain is Proteasome-associated ATPase from Mycolicibacterium vanbaalenii (strain DSM 7251 / JCM 13017 / BCRC 16820 / KCTC 9966 / NRRL B-24157 / PYR-1) (Mycobacterium vanbaalenii).